The sequence spans 195 residues: Thymidine kinase (195 aa).

Residues 9–16 (ATMNAGKS) and 89–92 (DEAQ) contribute to the ATP site. Residue Glu-90 is the Proton acceptor of the active site. Zn(2+)-binding residues include Cys-147, Cys-149, Cys-184, and His-187.

It belongs to the thymidine kinase family. As to quaternary structure, homotetramer.

The protein resides in the cytoplasm. It carries out the reaction thymidine + ATP = dTMP + ADP + H(+). This is Thymidine kinase from Rhizobium meliloti (strain 1021) (Ensifer meliloti).